A 436-amino-acid polypeptide reads, in one-letter code: Serine/threonine-protein kinase 40 (436 aa).

The span at 1–10 (MKRRASDRGA) shows a compositional bias: basic and acidic residues. Residues 1-25 (MKRRASDRGAGETSARAKALGSGIS) are disordered. Residues 35–332 (FILGPRLGNS…DVLEALSSII (298 aa)) form the Protein kinase domain. ATP contacts are provided by residues 41-49 (LGNSPVPSI) and lysine 66. Residue aspartate 197 is the Proton acceptor of the active site. The disordered stretch occupies residues 396–417 (RSWVPKRQSGAGVPPVRRLGHD).

It belongs to the protein kinase superfamily. CAMK Ser/Thr protein kinase family.

It localises to the nucleus. The protein resides in the cytoplasm. The enzyme catalyses L-seryl-[protein] + ATP = O-phospho-L-seryl-[protein] + ADP + H(+). It catalyses the reaction L-threonyl-[protein] + ATP = O-phospho-L-threonyl-[protein] + ADP + H(+). In terms of biological role, may be a negative regulator of NF-kappa-B and p53-mediated gene transcription. The protein is Serine/threonine-protein kinase 40 (STK40) of Bos taurus (Bovine).